Consider the following 146-residue polypeptide: Basic phospholipase A2 (146 aa).

The N-terminal stretch at 1–21 is a signal peptide; the sequence is MYPAHLLVLLAVCVSLLGAAS. Residues 22-27 constitute a propeptide that is removed on maturation; the sequence is IPPLPL. Disulfide bonds link cysteine 38–cysteine 98, cysteine 54–cysteine 145, cysteine 56–cysteine 72, cysteine 71–cysteine 126, cysteine 78–cysteine 119, cysteine 87–cysteine 112, and cysteine 105–cysteine 117. Residues tyrosine 55, glycine 57, and glycine 59 each contribute to the Ca(2+) site. Histidine 75 is an active-site residue. Aspartate 76 provides a ligand contact to Ca(2+). The active site involves aspartate 120.

This sequence belongs to the phospholipase A2 family. Group I subfamily. D49 sub-subfamily. Ca(2+) serves as cofactor. As to expression, expressed by the venom gland.

Its subcellular location is the secreted. The enzyme catalyses a 1,2-diacyl-sn-glycero-3-phosphocholine + H2O = a 1-acyl-sn-glycero-3-phosphocholine + a fatty acid + H(+). In terms of biological role, snake venom phospholipase A2 (PLA2) that inhibits neuromuscular transmission by blocking acetylcholine release from the nerve termini. PLA2 catalyzes the calcium-dependent hydrolysis of the 2-acyl groups in 3-sn-phosphoglycerides. This chain is Basic phospholipase A2, found in Hydrophis hardwickii (Hardwick's spine-bellied seasnake).